The chain runs to 408 residues: Cytochrome bc1 complex Rieske iron-sulfur subunit (408 aa).

3 helical membrane-spanning segments follow: residues 56-76 (VGIWAALGILGGIGFLITYIF), 98-118 (MLGITSGLCIISLGIAGVLYV), and 166-186 (LLAGGAVMAGLTIVAPLGGMI). The Rieske domain maps to 293–390 (HGPRNAVMLI…ITVDEEGYLI (98 aa)). [2Fe-2S] cluster-binding residues include Cys-333, His-335, Cys-352, and His-355. Cys-338 and Cys-354 are disulfide-bonded.

The protein belongs to the Rieske iron-sulfur protein family. In terms of assembly, the cytochrome bc1 complex is composed of a cytochrome b (QcrB), the Rieske iron-sulfur protein (QcrA) and a diheme cytochrome c (QcrC) subunit. The bc1 complex forms a supercomplex with cytochrome c oxidase (cytochrome aa3). Requires [2Fe-2S] cluster as cofactor.

It localises to the cell membrane. In terms of biological role, iron-sulfur subunit of the cytochrome bc1 complex, an essential component of the respiratory electron transport chain required for ATP synthesis. The bc1 complex catalyzes the oxidation of menaquinol and the reduction of cytochrome c in the respiratory chain. The bc1 complex operates through a Q-cycle mechanism that couples electron transfer to generation of the proton gradient that drives ATP synthesis. In Corynebacterium efficiens (strain DSM 44549 / YS-314 / AJ 12310 / JCM 11189 / NBRC 100395), this protein is Cytochrome bc1 complex Rieske iron-sulfur subunit (qcrA).